The primary structure comprises 250 residues: uncharacterized protein (250 aa).

Positions 1–24 (MKGFLKPNFSLGALFLTLSPIATA) are cleaved as a signal peptide. Residue C25 is the site of N-palmitoyl cysteine attachment. Residue C25 is the site of S-diacylglycerol cysteine attachment. One can recognise a TNase-like domain in the interval 44–200 (RLRKARVNHW…FNNRKNIFSY (157 aa)).

The protein localises to the cell membrane. This is an uncharacterized protein from Mycoplasma genitalium (strain ATCC 33530 / DSM 19775 / NCTC 10195 / G37) (Mycoplasmoides genitalium).